A 411-amino-acid polypeptide reads, in one-letter code: MNKELLNCERVWLNVTPATLRPDLADYGLLEPHALGVHEGKIHALVPMQDLKGPYPAHWQDMKGKLATPGLIDCHTHLIFAGSRAEEFELRQKGVPYAEIARKGGGILSTVRATRAASEEQLFTLAAARIKSLIREGVTTVEIKSGYGLTLEDELKMLRVARRLGEALPIRVKTTLLAAHAVPPEYRDDPDSWVETICQEIIPAAAEAGLADAVDVFCEHIGFSLAQTEQVYLAADQYGLPVKGHMEQLSNLGGSALAANFGALSVDHLEHLDQEGIQALAHRGVVATLLPTAFYFLKETKLPPVAALRKAHVPMAVSSDINPGTAPIVSLRMAMNMACTLFGLTPVEAMVGVTRNAARALGEQERLGQLRVGMLADFLVWNCAHPAELSYLIGVDQLVSRVVNGEETLHG.

Positions 75 and 77 each coordinate Fe(3+). Positions 75 and 77 each coordinate Zn(2+). 4-imidazolone-5-propanoate-binding residues include Arg-84, Tyr-147, and His-180. Tyr-147 contacts N-formimidoyl-L-glutamate. His-245 lines the Fe(3+) pocket. Zn(2+) is bound at residue His-245. Gln-248 lines the 4-imidazolone-5-propanoate pocket. Residue Asp-320 participates in Fe(3+) binding. Position 320 (Asp-320) interacts with Zn(2+). 2 residues coordinate N-formimidoyl-L-glutamate: Asn-322 and Gly-324. Position 325 (Thr-325) interacts with 4-imidazolone-5-propanoate.

It belongs to the metallo-dependent hydrolases superfamily. HutI family. It depends on Zn(2+) as a cofactor. Fe(3+) serves as cofactor.

It is found in the cytoplasm. It catalyses the reaction 4-imidazolone-5-propanoate + H2O = N-formimidoyl-L-glutamate. It participates in amino-acid degradation; L-histidine degradation into L-glutamate; N-formimidoyl-L-glutamate from L-histidine: step 3/3. Functionally, catalyzes the hydrolytic cleavage of the carbon-nitrogen bond in imidazolone-5-propanoate to yield N-formimidoyl-L-glutamate. It is the third step in the universal histidine degradation pathway. This chain is Imidazolonepropionase, found in Aeromonas salmonicida (strain A449).